Consider the following 352-residue polypeptide: Ketol-acid reductoisomerase (NAD(+)) (352 aa).

The region spanning 11–199 is the KARI N-terminal Rossmann domain; sequence ENVVTSEEFT…AIGSGYLFPT (189 aa). Residues 38 to 41 and 100 to 103 each bind NAD(+); these read YGVQ and DAGQ. Residue H124 is part of the active site. Residue G153 coordinates NAD(+). The KARI C-terminal knotted domain occupies 200–347; it reads TFEKEVFSDL…AAVRALRPEN (148 aa). 4 residues coordinate Mg(2+): D208, E212, E244, and E248. S270 provides a ligand contact to substrate.

Belongs to the ketol-acid reductoisomerase family. Mg(2+) is required as a cofactor.

The enzyme catalyses (2R)-2,3-dihydroxy-3-methylbutanoate + NAD(+) = (2S)-2-acetolactate + NADH + H(+). It participates in amino-acid biosynthesis; L-isoleucine biosynthesis; L-isoleucine from 2-oxobutanoate: step 2/4. Its pathway is amino-acid biosynthesis; L-valine biosynthesis; L-valine from pyruvate: step 2/4. Involved in the biosynthesis of branched-chain amino acids (BCAA). Catalyzes an alkyl-migration followed by a ketol-acid reduction of (S)-2-acetolactate (S2AL) to yield (R)-2,3-dihydroxy-isovalerate. In the isomerase reaction, S2AL is rearranged via a Mg-dependent methyl migration to produce 3-hydroxy-3-methyl-2-ketobutyrate (HMKB). In the reductase reaction, this 2-ketoacid undergoes a metal-dependent reduction by NADH to yield (R)-2,3-dihydroxy-isovalerate. The polypeptide is Ketol-acid reductoisomerase (NAD(+)) (Desulfosudis oleivorans (strain DSM 6200 / JCM 39069 / Hxd3) (Desulfococcus oleovorans)).